The sequence spans 371 residues: MVGNCQSVPMIGVATGAAIAGAWSDRHRQPPTFPALVCVLGFTETALIPGISAAGQTPSDRQITALADGEFLLRGIQPQYHYALPPLTAGASPALISRALIEALALPLYVFDAGLPLPRLPEMIDLGGTPARCLTTGQAMTPQMVAHLWEQGWSWGAKLSSQYPWLIIAECVVGGTTTALALCESLGIPARDCVGSSHRQSNHTQKWSLVQKGLAHLPPQADPFTCVAAIGDPMQVVVAAMALRASQTCGVLLAGGSQMIAVYAFGRAIAQWRQLPWRPEQIVVGTTRWLIEDQTAQIHRLAERVQCPLIYTQLDFSLSRHPALRAYEQGFVKEGVGAGGCAIAGHLLAGWRNSEMVDIVDRLADRWAKGM.

It belongs to the UPF0284 family.

This is UPF0284 protein tll2306 from Thermosynechococcus vestitus (strain NIES-2133 / IAM M-273 / BP-1).